Consider the following 341-residue polypeptide: Endoglucanase 1 (341 aa).

The signal sequence occupies residues 1-16 (MKTATLLAALSVLAGA). The propeptide occupies 17–30 (LAAPLAGDSALHRR). Catalysis depends on glutamate 166, which acts as the Proton donor. Glutamate 275 acts as the Nucleophile in catalysis.

It belongs to the glycosyl hydrolase 5 (cellulase A) family.

It catalyses the reaction Endohydrolysis of (1-&gt;4)-beta-D-glucosidic linkages in cellulose, lichenin and cereal beta-D-glucans.. In terms of biological role, has endoglucanase activity on carboxymethyl-cellulose (CMC). In Saitozyma flava (Cryptococcus flavus), this protein is Endoglucanase 1 (CMC1).